The chain runs to 89 residues: Large ribosomal subunit protein eL34 (89 aa).

Residues 41–69 (RPLNGVPRGRPSELRKLPKTAKRPERPYP) are disordered. A compositionally biased stretch (basic and acidic residues) spans 50-66 (RPSELRKLPKTAKRPER).

It belongs to the eukaryotic ribosomal protein eL34 family.

This Thermococcus gammatolerans (strain DSM 15229 / JCM 11827 / EJ3) protein is Large ribosomal subunit protein eL34.